The sequence spans 194 residues: Large ribosomal subunit protein eL15 (194 aa).

Positions 162–173 are enriched in basic residues; sequence KTSAGRRARGLH. The disordered stretch occupies residues 162 to 194; that stretch reads KTSAGRRARGLHNRGTGTEKCRPSLTSHKNQGK. The span at 185 to 194 shows a compositional bias: polar residues; the sequence is SLTSHKNQGK.

It belongs to the eukaryotic ribosomal protein eL15 family.

The chain is Large ribosomal subunit protein eL15 from Methanocorpusculum labreanum (strain ATCC 43576 / DSM 4855 / Z).